A 430-amino-acid chain; its full sequence is Trigger factor (430 aa).

One can recognise a PPIase FKBP-type domain in the interval 165–250 (TDIAIFDFEG…LHQIKTKKIP (86 aa)).

Belongs to the FKBP-type PPIase family. Tig subfamily.

It is found in the cytoplasm. The catalysed reaction is [protein]-peptidylproline (omega=180) = [protein]-peptidylproline (omega=0). In terms of biological role, involved in protein export. Acts as a chaperone by maintaining the newly synthesized protein in an open conformation. Functions as a peptidyl-prolyl cis-trans isomerase. In Onion yellows phytoplasma (strain OY-M), this protein is Trigger factor.